A 90-amino-acid polypeptide reads, in one-letter code: Phosphoribosyl-ATP pyrophosphatase (90 aa).

The protein belongs to the PRA-PH family.

The protein localises to the cytoplasm. The enzyme catalyses 1-(5-phospho-beta-D-ribosyl)-ATP + H2O = 1-(5-phospho-beta-D-ribosyl)-5'-AMP + diphosphate + H(+). The protein operates within amino-acid biosynthesis; L-histidine biosynthesis; L-histidine from 5-phospho-alpha-D-ribose 1-diphosphate: step 2/9. This is Phosphoribosyl-ATP pyrophosphatase from Streptomyces griseus subsp. griseus (strain JCM 4626 / CBS 651.72 / NBRC 13350 / KCC S-0626 / ISP 5235).